The following is a 98-amino-acid chain: Prolactin-releasing peptide (98 aa).

An N-terminal signal peptide occupies residues 1-22 (MKAVGAWLLCLLLLGLALQGAA). Phe-53 carries the phenylalanine amide modification. A propeptide spanning residues 58 to 98 (AAPGDGPRPGPRRELACIPLEGGAEPSRALLGRLTAQLVQE) is cleaved from the precursor.

More abundantly expressed in the brainstem than the hypothalamus.

The protein resides in the secreted. Stimulates prolactin (PRL) release and regulates the expression of prolactin through its receptor GPR10. May stimulate lactotrophs directly to secrete PRL. The sequence is that of Prolactin-releasing peptide (PRLH) from Ovis aries (Sheep).